Reading from the N-terminus, the 257-residue chain is 5'-nucleotidase SurE (257 aa).

A divalent metal cation-binding residues include aspartate 8, aspartate 9, serine 40, and asparagine 92.

This sequence belongs to the SurE nucleotidase family. It depends on a divalent metal cation as a cofactor.

It localises to the cytoplasm. It catalyses the reaction a ribonucleoside 5'-phosphate + H2O = a ribonucleoside + phosphate. Nucleotidase that shows phosphatase activity on nucleoside 5'-monophosphates. The protein is 5'-nucleotidase SurE of Rhizobium etli (strain ATCC 51251 / DSM 11541 / JCM 21823 / NBRC 15573 / CFN 42).